The primary structure comprises 463 residues: Glycine--tRNA ligase (463 aa).

Substrate is bound by residues arginine 100 and glutamate 175. Residues 207–209 (RNE), 217–222 (FRTREF), 291–292 (EL), and 335–338 (GADR) each bind ATP. 222 to 226 (FEQME) lines the substrate pocket. Residue 331–335 (EPSLG) coordinates substrate.

The protein belongs to the class-II aminoacyl-tRNA synthetase family. Homodimer.

Its subcellular location is the cytoplasm. The catalysed reaction is tRNA(Gly) + glycine + ATP = glycyl-tRNA(Gly) + AMP + diphosphate. Catalyzes the attachment of glycine to tRNA(Gly). The chain is Glycine--tRNA ligase from Clostridium beijerinckii (strain ATCC 51743 / NCIMB 8052) (Clostridium acetobutylicum).